The chain runs to 226 residues: Small ribosomal subunit protein uS5 (226 aa).

Residues 1–18 (MAAPQRSRTTGAPSSGGP) show a composition bias toward polar residues. Positions 1–45 (MAAPQRSRTTGAPSSGGPSENERGRGGDRRGGDRRGGDRRGGDDR) are disordered. Over residues 20 to 45 (ENERGRGGDRRGGDRRGGDRRGGDDR) the composition is skewed to basic and acidic residues. Residues 48–111 (FVERVVTINR…EEAKKNFFRV (64 aa)) enclose the S5 DRBM domain.

The protein belongs to the universal ribosomal protein uS5 family. In terms of assembly, part of the 30S ribosomal subunit. Contacts proteins S4 and S8.

In terms of biological role, with S4 and S12 plays an important role in translational accuracy. Its function is as follows. Located at the back of the 30S subunit body where it stabilizes the conformation of the head with respect to the body. This chain is Small ribosomal subunit protein uS5, found in Beutenbergia cavernae (strain ATCC BAA-8 / DSM 12333 / CCUG 43141 / JCM 11478 / NBRC 16432 / NCIMB 13614 / HKI 0122).